The chain runs to 408 residues: Na(+)-translocating NADH-quinone reductase subunit F (408 aa).

The chain crosses the membrane as a helical span at residues 4–24 (IYLGVGMFIAIVLALVLIIMF). The region spanning 33–127 (GEVTISINGD…DMDIELPEEI (95 aa)) is the 2Fe-2S ferredoxin-type domain. [2Fe-2S] cluster contacts are provided by C70, C76, C79, and C111. The FAD-binding FR-type domain maps to 130 to 270 (IKKWDCEVIS…SGPFGEFFAK (141 aa)).

Belongs to the NqrF family. In terms of assembly, composed of six subunits; NqrA, NqrB, NqrC, NqrD, NqrE and NqrF. The cofactor is [2Fe-2S] cluster. FAD serves as cofactor.

Its subcellular location is the cell inner membrane. The catalysed reaction is a ubiquinone + n Na(+)(in) + NADH + H(+) = a ubiquinol + n Na(+)(out) + NAD(+). Its function is as follows. NQR complex catalyzes the reduction of ubiquinone-1 to ubiquinol by two successive reactions, coupled with the transport of Na(+) ions from the cytoplasm to the periplasm. The first step is catalyzed by NqrF, which accepts electrons from NADH and reduces ubiquinone-1 to ubisemiquinone by a one-electron transfer pathway. The sequence is that of Na(+)-translocating NADH-quinone reductase subunit F from Pseudoalteromonas atlantica (strain T6c / ATCC BAA-1087).